Consider the following 160-residue polypeptide: Large ribosomal subunit protein uL22c (160 aa).

It belongs to the universal ribosomal protein uL22 family. In terms of assembly, part of the 50S ribosomal subunit.

It is found in the plastid. The protein resides in the chloroplast. This protein binds specifically to 23S rRNA. Functionally, the globular domain of the protein is located near the polypeptide exit tunnel on the outside of the subunit, while an extended beta-hairpin is found that lines the wall of the exit tunnel in the center of the 70S ribosome. This Arabidopsis thaliana (Mouse-ear cress) protein is Large ribosomal subunit protein uL22c (rpl22).